The sequence spans 411 residues: MMP alpha-(1-&gt;4)-mannosyltransferase (411 aa).

It belongs to the glycosyltransferase group 1 family. Glycosyltransferase 4 subfamily.

It catalyses the reaction [3-O-methyl-alpha-D-mannosyl-(1-&gt;4)](n)-3-O-methyl-D-mannose + GDP-alpha-D-mannose = alpha-D-mannosyl-(1-&gt;4)-[3-O-methyl-alpha-D-mannosyl-(1-&gt;4)](n)-3-O-methyl-D-mannose + GDP + H(+). The catalysed reaction is [3-O-methyl-alpha-D-mannosyl-(1-&gt;4)](n)-1-O,3-O-dimethyl-alpha-D-mannose + GDP-alpha-D-mannose = alpha-D-mannosyl-(1-&gt;4)-[3-O-methyl-alpha-D-mannosyl-(1-&gt;4)](n)-1-O,3-O-dimethyl-alpha-D-mannose + GDP + H(+). Activity is significantly enhanced in the presence of Mg(2+). Glycosyltransferase involved in the biosynthesis of 3-O-methylmannose polysaccharides (MMP), which are intracellular polymethylated polysaccharides implicated in the modulation of fatty acid metabolism in non-tuberculous mycobacteria. Highly specific alpha-(1-&gt;4)-mannosyltransferase that can transfer mannose units from GDP-mannose to a wide range of alpha-(1-&gt;4) oligomannosides longer than three mannoses, including all hydrolytic products of MmpH. Can use synthetic trimannosides and tetramannosides as substrates, but not mono- and disaccharides, and is significantly more active with the methylated substrates, preferring the tetramannosides over the trimannosides. The protein is MMP alpha-(1-&gt;4)-mannosyltransferase of Mycolicibacterium hassiacum (strain DSM 44199 / CIP 105218 / JCM 12690 / 3849) (Mycobacterium hassiacum).